The chain runs to 213 residues: Imidazole glycerol phosphate synthase subunit HisH (213 aa).

The region spanning 4–213 (SIAIVDYGMG…LYRNFVHWKP (210 aa)) is the Glutamine amidotransferase type-1 domain. The Nucleophile role is filled by Cys-83. Residues His-193 and Glu-195 contribute to the active site.

Heterodimer of HisH and HisF.

The protein localises to the cytoplasm. The enzyme catalyses 5-[(5-phospho-1-deoxy-D-ribulos-1-ylimino)methylamino]-1-(5-phospho-beta-D-ribosyl)imidazole-4-carboxamide + L-glutamine = D-erythro-1-(imidazol-4-yl)glycerol 3-phosphate + 5-amino-1-(5-phospho-beta-D-ribosyl)imidazole-4-carboxamide + L-glutamate + H(+). It carries out the reaction L-glutamine + H2O = L-glutamate + NH4(+). The protein operates within amino-acid biosynthesis; L-histidine biosynthesis; L-histidine from 5-phospho-alpha-D-ribose 1-diphosphate: step 5/9. Its function is as follows. IGPS catalyzes the conversion of PRFAR and glutamine to IGP, AICAR and glutamate. The HisH subunit catalyzes the hydrolysis of glutamine to glutamate and ammonia as part of the synthesis of IGP and AICAR. The resulting ammonia molecule is channeled to the active site of HisF. This Burkholderia lata (strain ATCC 17760 / DSM 23089 / LMG 22485 / NCIMB 9086 / R18194 / 383) protein is Imidazole glycerol phosphate synthase subunit HisH.